Consider the following 587-residue polypeptide: Branchpoint-bridging protein (587 aa).

Over residues 1-16 (MLNSRSVGSTGSNNTP) the composition is skewed to polar residues. 2 disordered regions span residues 1 to 64 (MLNS…DGRG) and 121 to 142 (GDVV…DNHG). Positions 44 to 64 (DSYKSNSRMDHRPDGYHDGRG) are enriched in basic and acidic residues. Phosphoserine occurs at positions 131 and 133. One can recognise a KH domain in the interval 191–271 (YVPVKDYPEI…DKINHAIKLI (81 aa)). 2 consecutive CCHC-type zinc fingers follow at residues 309–326 (QVCQ…DCPE) and 334–351 (IVCR…DCPV). Disordered stretches follow at residues 375-490 (GGGS…PGTS) and 551-587 (IPGA…YSNR). Residues 379–399 (AISNGNGEPQKSIEFSESGAA) are compositionally biased toward polar residues. Positions 410-454 (AAASTSVSSSTSSPAPWAKPASSAAPSNPAPWQQPAAPQSAPALS) are enriched in low complexity. Composition is skewed to polar residues over residues 465-483 (QPTQ…SQNA) and 563-573 (SYNTSESSNLN).

The protein belongs to the BBP/SF1 family. As to quaternary structure, U2AF large subunit (u2af59), U2AF small subunit (u2af23) and bpb1 interact to form a complex required for complex A formation.

It localises to the cytoplasm. The protein resides in the nucleus. In terms of biological role, necessary for the splicing of pre-mRNA. The BPB1(SF1)-u2af59-u2af23 complex has a role in the recognition of the branch site (5'-UACUAAC-3'), the pyrimidine tract and the 3'-splice site at the 3'-end of introns. The protein is Branchpoint-bridging protein (bpb1) of Schizosaccharomyces pombe (strain 972 / ATCC 24843) (Fission yeast).